A 443-amino-acid polypeptide reads, in one-letter code: ATP-dependent protease ATPase subunit HslU (443 aa).

Residues I18, 60–65 (GVGKTE), D256, E321, and R393 each bind ATP.

This sequence belongs to the ClpX chaperone family. HslU subfamily. As to quaternary structure, a double ring-shaped homohexamer of HslV is capped on each side by a ring-shaped HslU homohexamer. The assembly of the HslU/HslV complex is dependent on binding of ATP.

The protein localises to the cytoplasm. ATPase subunit of a proteasome-like degradation complex; this subunit has chaperone activity. The binding of ATP and its subsequent hydrolysis by HslU are essential for unfolding of protein substrates subsequently hydrolyzed by HslV. HslU recognizes the N-terminal part of its protein substrates and unfolds these before they are guided to HslV for hydrolysis. The polypeptide is ATP-dependent protease ATPase subunit HslU (Buchnera aphidicola subsp. Schizaphis graminum (strain Sg)).